Reading from the N-terminus, the 332-residue chain is tRNA dimethylallyltransferase (332 aa).

ATP is bound at residue 14-21 (GPTASGKT). Substrate is bound at residue 16-21 (TASGKT). The tract at residues 39 to 42 (DSMQ) is interaction with substrate tRNA. Residues 312–332 (NKRSSNHDCKRKHPRPSTREL) are disordered. The segment covering 320–332 (CKRKHPRPSTREL) has biased composition (basic residues).

This sequence belongs to the IPP transferase family. As to quaternary structure, monomer. The cofactor is Mg(2+).

It catalyses the reaction adenosine(37) in tRNA + dimethylallyl diphosphate = N(6)-dimethylallyladenosine(37) in tRNA + diphosphate. Its function is as follows. Catalyzes the transfer of a dimethylallyl group onto the adenine at position 37 in tRNAs that read codons beginning with uridine, leading to the formation of N6-(dimethylallyl)adenosine (i(6)A). The sequence is that of tRNA dimethylallyltransferase from Staphylococcus epidermidis (strain ATCC 35984 / DSM 28319 / BCRC 17069 / CCUG 31568 / BM 3577 / RP62A).